The chain runs to 217 residues: MSCAGAAAAPRLWRLRPGARRSLSAYGRRTSVRFRSSGMTLDNISRAAVDRIIRVDHAGEYGANRIYAGQMAVLGRTSVGPVIQKMWDQEKDHLKKFNELMVTFRVRPTVLMPLWNVLGFALGAGTALLGKEGAMACTVAVEESIAHHYNNQIRTLMEEDPEKYEELLQLIKKFRDEELEHHDIGLDHDAELAPAYAVLKSIIQAGCRVAIYLSERL.

Residues 1-35 (MSCAGAAAAPRLWRLRPGARRSLSAYGRRTSVRFR) constitute a mitochondrion transit peptide. The interval 11 to 29 (RLWRLRPGARRSLSAYGRR) is required for nuclear localization. A run of 2 repeats spans residues 48-129 (AVDR…TALL) and 130-217 (GKEG…SERL). The 2 X approximate tandem repeats stretch occupies residues 48–217 (AVDRIIRVDH…RVAIYLSERL (170 aa)). Arginine 51 is a binding site for NADH. Positions 60, 90, 93, 142, 178, and 181 each coordinate Fe cation. NADH contacts are provided by tyrosine 212 and arginine 216.

The protein belongs to the COQ7 family. As to quaternary structure, component of a multi-subunit COQ enzyme complex. Interacts with COQ8B and COQ6. Interacts with COQ9. Fe cation is required as a cofactor. Expressed dominantly in heart and skeletal muscle.

It localises to the mitochondrion inner membrane. The protein localises to the mitochondrion. It is found in the nucleus. The protein resides in the chromosome. The catalysed reaction is a 5-methoxy-2-methyl-3-(all-trans-polyprenyl)benzoquinone + NADH + O2 = a 3-demethylubiquinone + NAD(+) + H2O. It participates in cofactor biosynthesis; ubiquinone biosynthesis. Its function is as follows. Catalyzes the hydroxylation of the 5-methoxy-2-methyl-3-(all-trans-polyprenyl)benzoquinone at the C6 position and participates in the biosynthesis of ubiquinone. Catalyzes the reaction through a substrate-mediated reduction pathway, whereby NADH shuttles electrons to 5-methoxy-2-methyl-3-(all-trans-decaprenyl)benzoquinone, which then transfers the electrons to the two Fe(3+) centers. The binding of 5-methoxy-2-methyl-3-(all-trans-polyprenyl)benzoquinone (DMQn) mediates reduction of the diiron center by nicotinamide adenine dinucleotide (NADH) and initiates oxygen activation for subsequent DMQ hydroxylation. The physiological substrates are 5-methoxy-2-methyl-3-(all-trans-nonaprenyl)benzoquinone (DMQ(9)) and 5-methoxy-2-methyl-3-(all-trans-decaprenyl)benzoquinone (DMQ(10)), however in vitro the enzyme does not have any specificity concerning the length of the polyprenyl tail, and accepts tails of various lengths with similar efficiency. Also has a structural role in the COQ enzyme complex, stabilizing other COQ polypeptides. Involved in lifespan determination in a ubiquinone-independent manner. Plays a role in modulating mitochondrial stress responses, acting in the nucleus, perhaps via regulating gene expression, independent of its characterized mitochondrial function in ubiquinone biosynthesis. This is NADPH-dependent 3-demethoxyubiquinone 3-hydroxylase, mitochondrial from Homo sapiens (Human).